A 37-amino-acid polypeptide reads, in one-letter code: Large ribosomal subunit protein bL36c (37 aa).

This sequence belongs to the bacterial ribosomal protein bL36 family.

It localises to the plastid. The protein resides in the chloroplast. The polypeptide is Large ribosomal subunit protein bL36c (Staurastrum punctulatum (Green alga)).